The following is a 204-amino-acid chain: 8-oxoguanine DNA glycosylase/AP lyase (204 aa).

Active-site residues include Lys128 and Asp146.

Belongs to the type-2 OGG1 family.

It catalyses the reaction 2'-deoxyribonucleotide-(2'-deoxyribose 5'-phosphate)-2'-deoxyribonucleotide-DNA = a 3'-end 2'-deoxyribonucleotide-(2,3-dehydro-2,3-deoxyribose 5'-phosphate)-DNA + a 5'-end 5'-phospho-2'-deoxyribonucleoside-DNA + H(+). Catalyzes the excision of an oxidatively damaged form of guanine (7,8-dihydro-8-oxoguanine = 8-oxoG) from DNA. Also cleaves the DNA backbone at apurinic/apyrimidinic sites (AP sites). The protein is 8-oxoguanine DNA glycosylase/AP lyase of Sulfurisphaera tokodaii (strain DSM 16993 / JCM 10545 / NBRC 100140 / 7) (Sulfolobus tokodaii).